Reading from the N-terminus, the 204-residue chain is Leucyl/phenylalanyl-tRNA--protein transferase (204 aa).

Belongs to the L/F-transferase family.

The protein resides in the cytoplasm. The enzyme catalyses N-terminal L-lysyl-[protein] + L-leucyl-tRNA(Leu) = N-terminal L-leucyl-L-lysyl-[protein] + tRNA(Leu) + H(+). It carries out the reaction N-terminal L-arginyl-[protein] + L-leucyl-tRNA(Leu) = N-terminal L-leucyl-L-arginyl-[protein] + tRNA(Leu) + H(+). The catalysed reaction is L-phenylalanyl-tRNA(Phe) + an N-terminal L-alpha-aminoacyl-[protein] = an N-terminal L-phenylalanyl-L-alpha-aminoacyl-[protein] + tRNA(Phe). Its function is as follows. Functions in the N-end rule pathway of protein degradation where it conjugates Leu, Phe and, less efficiently, Met from aminoacyl-tRNAs to the N-termini of proteins containing an N-terminal arginine or lysine. The protein is Leucyl/phenylalanyl-tRNA--protein transferase of Brucella abortus (strain 2308).